A 111-amino-acid chain; its full sequence is Large ribosomal subunit protein uL22 (111 aa).

Belongs to the universal ribosomal protein uL22 family. Part of the 50S ribosomal subunit.

This protein binds specifically to 23S rRNA; its binding is stimulated by other ribosomal proteins, e.g. L4, L17, and L20. It is important during the early stages of 50S assembly. It makes multiple contacts with different domains of the 23S rRNA in the assembled 50S subunit and ribosome. Its function is as follows. The globular domain of the protein is located near the polypeptide exit tunnel on the outside of the subunit, while an extended beta-hairpin is found that lines the wall of the exit tunnel in the center of the 70S ribosome. In Xylella fastidiosa (strain M23), this protein is Large ribosomal subunit protein uL22.